The following is a 327-amino-acid chain: Putative D-threonate 4-phosphate dehydrogenase (327 aa).

Substrate is bound by residues H139 and T140. A divalent metal cation-binding residues include H169, H213, and H268. Substrate contacts are provided by K276, N285, and R294.

The protein belongs to the PdxA family. PdxA2 subfamily. Homodimer. Requires a divalent metal cation as cofactor.

The catalysed reaction is 4-O-phospho-D-threonate + NAD(+) = dihydroxyacetone phosphate + CO2 + NADH. In terms of biological role, catalyzes the NAD-dependent oxidation and subsequent decarboxylation of D-threonate 4-phosphate to produce dihydroxyacetone phosphate (DHAP). This is Putative D-threonate 4-phosphate dehydrogenase from Salmonella typhi.